Here is a 505-residue protein sequence, read N- to C-terminus: MFS efflux pump atnC (505 aa).

Helical transmembrane passes span 48–68 (VLQVILLCASATLTLDIGLTV), 117–137 (LIGWQTVFDGIPAIFLAIPYG), 148–168 (VLLLCFLGLALSTAWALLVCW), 181–201 (LFQCLGGGPAVATAVLEATIA), 216–236 (LQATVLISDILANPLSSVLMA), 240–260 (WTPCFLGVGIQALATVLLIAL), 304–324 (VAGLVFSLLILTVSAESLDFL), 343–363 (LSLRAVVEFGLLLVVGSLLLF), 377–399 (LLIARLSLGLIVAGLLILSLSPT), 403–425 (AILVYTLGAGFQPAIMSLLASLW), 439–459 (TVAIILAVGGVISGPLISLMY), and 469–489 (WVGLPYFVASGLCAGIAGVLL).

Belongs to the major facilitator superfamily.

The protein resides in the membrane. The protein operates within secondary metabolite biosynthesis. In terms of biological role, MFS efflux pump; part of the gene cluster that mediates the biosynthesis of aspercryptins, linear lipopeptides built from six amino acids including 2 highly unusual and nonproteogenic amino acids, 2-amino-octanoic acid (2aoa) and 2-amino-dodecanol (2adol). This Emericella nidulans (strain FGSC A4 / ATCC 38163 / CBS 112.46 / NRRL 194 / M139) (Aspergillus nidulans) protein is MFS efflux pump atnC.